Here is a 581-residue protein sequence, read N- to C-terminus: MKTIKKDSEFYDSLATLKKHINKYIEEKVLKYSISSQLYKLEKPEIIELIKISNDYEKEKNAFNTSLEECYYKNTQNEAIKKWILEIVRNKNFIQISKEANLNTKKLGTTYKLKSSNFLKLIEIQNSPYYSQEKKDIYKQIILNFSSNINIDSLEQTIDILVAVRNRNKIKILNILNKNLKYRPENQKVFKSSLTNKESRLIKLKRMLILTYWPVGCLSKNIFIKILIKXYKYLEEEILALKYNEILNYLRALKTLSLNEIFYKGSSKNISFNYFFSDFTQYAPKDFQDTLKCYLYVIEKTITKKYLTWFFKDKISNNWESFIDALEYIEKHKLINIKEKIKEIITAKFQTEDFFISFDKTNFNPYESSIFKERYIKSAFLEIIMHYVKKNSQNIETYGWIAFYIYADNKDKKIFCQRMKEFFKSKTFEIQNQIFVYFLSFYPNIEYKHFKFISDILLYLDENKITIPKKIIKIQKINPNQLDYQKSYLLIKSLKTRSRILKIIIKNIRFNLIEKLEDENEKKLLPAMCYLIYCENLVELKNNRKIKSNEKNSLLEFISFFKTKLKQKINFKKELMKSKGI.

This is an uncharacterized protein from Borreliella burgdorferi (strain ATCC 35210 / DSM 4680 / CIP 102532 / B31) (Borrelia burgdorferi).